The primary structure comprises 741 residues: Catalase-peroxidase 2 (741 aa).

Positions 1–27 (MKINTLPTLSALTLAMSLALGAGMATA) are cleaved as a signal peptide. Residues 106–229 (WHSAGVYRIF…MGATQMGLIY (124 aa)) constitute a cross-link (tryptophyl-tyrosyl-methioninium (Trp-Tyr) (with M-255)). Histidine 107 acts as the Proton acceptor in catalysis. The segment at residues 229 to 255 (YVNPEGPNGVPDPLASAKEIRDTFGRM) is a cross-link (tryptophyl-tyrosyl-methioninium (Tyr-Met) (with W-106)). Residue histidine 270 coordinates heme b.

It belongs to the peroxidase family. Peroxidase/catalase subfamily. Homodimer or homotetramer. Heme b serves as cofactor. In terms of processing, formation of the three residue Trp-Tyr-Met cross-link is important for the catalase, but not the peroxidase activity of the enzyme.

The catalysed reaction is H2O2 + AH2 = A + 2 H2O. It catalyses the reaction 2 H2O2 = O2 + 2 H2O. Its function is as follows. Bifunctional enzyme with both catalase and broad-spectrum peroxidase activity. This is Catalase-peroxidase 2 from Shewanella oneidensis (strain ATCC 700550 / JCM 31522 / CIP 106686 / LMG 19005 / NCIMB 14063 / MR-1).